Consider the following 393-residue polypeptide: Mitogen-activated protein kinase SIPK (393 aa).

The span at Met-1–Met-11 shows a compositional bias: polar residues. Residues Met-1 to Asp-31 are disordered. The 286-residue stretch at Lys-60–Leu-345 folds into the Protein kinase domain. ATP is bound by residues Ile-66–Val-74 and Lys-89. Residue Asp-186 is the Proton acceptor of the active site. The TXY signature appears at Thr-218–Tyr-220.

It belongs to the protein kinase superfamily. CMGC Ser/Thr protein kinase family. MAP kinase subfamily. In terms of assembly, interacts with SIPKK.

It carries out the reaction L-tyrosyl-[protein] + ATP = O-phospho-L-tyrosyl-[protein] + ADP + H(+). The enzyme catalyses L-seryl-[protein] + ATP = O-phospho-L-seryl-[protein] + ADP + H(+). It catalyses the reaction L-threonyl-[protein] + ATP = O-phospho-L-threonyl-[protein] + ADP + H(+). With respect to regulation, activated by threonine and tyrosine phosphorylation. In terms of biological role, phosphorylates myelin basic protein (MBP) in vitro. May be involved in disease resistance. In Nicotiana tabacum (Common tobacco), this protein is Mitogen-activated protein kinase SIPK.